A 478-amino-acid polypeptide reads, in one-letter code: Glutamine synthetase (478 aa).

Residue lysine 14 forms an Isoglutamyl lysine isopeptide (Lys-Gln) (interchain with Q-Cter in protein Pup) linkage. The GS beta-grasp domain maps to 16-100 (ENVEYVDIRF…MNFFVHDPFT (85 aa)). Residues 108–478 (PRNVARKAEN…PYEFSLYYDV (371 aa)) enclose the GS catalytic domain. The Mg(2+) site is built by glutamate 133 and glutamate 135. ATP is bound at residue glutamate 214. 2 residues coordinate Mg(2+): glutamate 219 and glutamate 227. Residue 230 to 232 (YKF) coordinates ATP. L-glutamate is bound by residues 271–272 (NG) and glycine 272. Histidine 276 serves as a coordination point for Mg(2+). ATP is bound by residues 278–280 (HQS) and serine 280. L-glutamate contacts are provided by arginine 329, glutamate 335, and arginine 347. Residues arginine 347, arginine 352, and lysine 361 each coordinate ATP. Glutamate 366 lines the Mg(2+) pocket. Residue arginine 368 participates in L-glutamate binding. Tyrosine 406 is modified (O-AMP-tyrosine).

This sequence belongs to the glutamine synthetase family. In terms of assembly, oligomer of 12 subunits arranged in the form of two hexagons. It depends on Mg(2+) as a cofactor.

It is found in the cytoplasm. It catalyses the reaction L-glutamate + NH4(+) + ATP = L-glutamine + ADP + phosphate + H(+). With respect to regulation, when cellular nitrogen levels are high, the C-terminal adenylyl transferase (AT) of GlnE inhibits GlnA by covalent transfer of an adenylyl group from ATP to Tyr-406. Conversely, when nitrogen levels are low, the N-terminal adenylyl removase (AR) of GlnE activates GlnA by removing the adenylyl group by phosphorolysis. The fully adenylated enzyme complex is inactive. Functionally, involved in nitrogen metabolism via ammonium assimilation. Catalyzes the ATP-dependent biosynthesis of glutamine from glutamate and ammonia. The polypeptide is Glutamine synthetase (Mycolicibacterium smegmatis (strain ATCC 700084 / mc(2)155) (Mycobacterium smegmatis)).